The following is a 351-amino-acid chain: Purine permease 3 (351 aa).

Transmembrane regions (helical) follow at residues 4-24 (ALVI…PLIM), 35-55 (IWFS…PLLF), 72-92 (FFLI…LSGF), 108-128 (TAAL…FFMV), 132-152 (FTPF…VLGM), 168-188 (ITGF…LPLV), 207-227 (FQLI…FIAG), 249-269 (VAVF…GLIF), 274-294 (LVSG…AVIF), and 304-324 (GLSL…EIKS). Residues 45 to 152 (GFPVIFIPLL…LTVGAAVLGM (108 aa)) enclose the EamA domain. The disordered stretch occupies residues 329-351 (RRIQQEESQETEQSSLSRPISEC).

This sequence belongs to the purine permeases (TC 2.A.7.14) family. Restricted to pollen.

The protein resides in the membrane. Functionally, may be involved in transport of purine derivatives during pollen germination and tube elongation. This chain is Purine permease 3 (PUP3), found in Arabidopsis thaliana (Mouse-ear cress).